Consider the following 279-residue polypeptide: Ribosome maturation factor RimP (279 aa).

The tract at residues 197 to 279 (LAEEGEPEEQ…GAPALRPTPK (83 aa)) is disordered. Residues 199–210 (EEGEPEEQEEGG) show a composition bias toward acidic residues.

Belongs to the RimP family.

Its subcellular location is the cytoplasm. Functionally, required for maturation of 30S ribosomal subunits. The sequence is that of Ribosome maturation factor RimP from Methylocella silvestris (strain DSM 15510 / CIP 108128 / LMG 27833 / NCIMB 13906 / BL2).